We begin with the raw amino-acid sequence, 178 residues long: Probable inosine/xanthosine triphosphatase (178 aa).

Belongs to the YjjX NTPase family. Homodimer. The cofactor is Mg(2+). Mn(2+) is required as a cofactor.

It catalyses the reaction XTP + H2O = XDP + phosphate + H(+). The catalysed reaction is ITP + H2O = IDP + phosphate + H(+). Phosphatase that hydrolyzes non-canonical purine nucleotides such as XTP and ITP to their respective diphosphate derivatives. Probably excludes non-canonical purines from DNA/RNA precursor pool, thus preventing their incorporation into DNA/RNA and avoiding chromosomal lesions. This is Probable inosine/xanthosine triphosphatase from Pyrobaculum aerophilum (strain ATCC 51768 / DSM 7523 / JCM 9630 / CIP 104966 / NBRC 100827 / IM2).